The following is a 436-amino-acid chain: UPF0597 protein YhaM (436 aa).

The protein belongs to the UPF0597 family.

Functionally, thought to be a D-serine dehydratase, however it does not complement a dsdA (D-serine dehydratase) mutant in strain CFT073, suggesting it may not have that function. This chain is UPF0597 protein YhaM, found in Escherichia coli O157:H7.